The sequence spans 621 residues: Methionine--tRNA ligase (621 aa).

Residues 11 to 21 (PYANGPRHIGH) carry the 'HIGH' region motif. 4 residues coordinate Zn(2+): Cys-143, Cys-146, Cys-156, and Cys-159. Positions 347-351 (KFSSS) match the 'KMSKS' region motif. Ser-350 serves as a coordination point for ATP.

This sequence belongs to the class-I aminoacyl-tRNA synthetase family. MetG type 1 subfamily. As to quaternary structure, monomer. It depends on Zn(2+) as a cofactor.

Its subcellular location is the cytoplasm. The catalysed reaction is tRNA(Met) + L-methionine + ATP = L-methionyl-tRNA(Met) + AMP + diphosphate. Is required not only for elongation of protein synthesis but also for the initiation of all mRNA translation through initiator tRNA(fMet) aminoacylation. This Bifidobacterium longum (strain NCC 2705) protein is Methionine--tRNA ligase.